Reading from the N-terminus, the 273-residue chain is Large ribosomal subunit protein uL2 (273 aa).

Positions 221–273 (RGTAMNPVDHPHGGGEGRNFGKHPVTPWGVQTKGKKTRHNKRTDKFIVRRRGK) are disordered. The span at 253 to 273 (KGKKTRHNKRTDKFIVRRRGK) shows a compositional bias: basic residues.

Belongs to the universal ribosomal protein uL2 family. In terms of assembly, part of the 50S ribosomal subunit. Forms a bridge to the 30S subunit in the 70S ribosome.

Functionally, one of the primary rRNA binding proteins. Required for association of the 30S and 50S subunits to form the 70S ribosome, for tRNA binding and peptide bond formation. It has been suggested to have peptidyltransferase activity; this is somewhat controversial. Makes several contacts with the 16S rRNA in the 70S ribosome. The protein is Large ribosomal subunit protein uL2 of Glaesserella parasuis serovar 5 (strain SH0165) (Haemophilus parasuis).